The chain runs to 883 residues: AP-5 complex subunit beta-1 (883 aa).

Probably part of the adaptor protein complex 5 (AP-5).

In terms of biological role, as part of AP-5, a probable fifth adaptor protein complex, it may be involved in endosomal transport. In Xenopus tropicalis (Western clawed frog), this protein is AP-5 complex subunit beta-1 (ap5b1).